Reading from the N-terminus, the 869-residue chain is Translation initiation factor IF-2 (869 aa).

Disordered regions lie at residues K51 to K78 and E105 to K277. Polar residues predominate over residues Q67–M76. Low complexity predominate over residues R110–L119. Basic and acidic residues predominate over residues E120–V241. One can recognise a tr-type G domain in the interval S369–T542. The G1 stretch occupies residues G378–T385. G378–T385 contacts GTP. Positions G403–H407 are G2. Residues D424 to G427 are G3. Residues D424–H428 and N478–D481 contribute to the GTP site. Residues N478–D481 form a G4 region. A G5 region spans residues S514 to K516.

The protein belongs to the TRAFAC class translation factor GTPase superfamily. Classic translation factor GTPase family. IF-2 subfamily.

Its subcellular location is the cytoplasm. Functionally, one of the essential components for the initiation of protein synthesis. Protects formylmethionyl-tRNA from spontaneous hydrolysis and promotes its binding to the 30S ribosomal subunits. Also involved in the hydrolysis of GTP during the formation of the 70S ribosomal complex. The protein is Translation initiation factor IF-2 of Pseudoalteromonas atlantica (strain T6c / ATCC BAA-1087).